The chain runs to 190 residues: Pyridoxal 5'-phosphate synthase subunit PdxT (190 aa).

46-48 (GES) provides a ligand contact to L-glutamine. Cysteine 78 serves as the catalytic Nucleophile. Residues arginine 106 and 135–136 (IR) each bind L-glutamine. Catalysis depends on charge relay system residues histidine 171 and glutamate 173.

The protein belongs to the glutaminase PdxT/SNO family. In the presence of PdxS, forms a dodecamer of heterodimers. Only shows activity in the heterodimer.

The catalysed reaction is aldehydo-D-ribose 5-phosphate + D-glyceraldehyde 3-phosphate + L-glutamine = pyridoxal 5'-phosphate + L-glutamate + phosphate + 3 H2O + H(+). It carries out the reaction L-glutamine + H2O = L-glutamate + NH4(+). Its pathway is cofactor biosynthesis; pyridoxal 5'-phosphate biosynthesis. Its function is as follows. Catalyzes the hydrolysis of glutamine to glutamate and ammonia as part of the biosynthesis of pyridoxal 5'-phosphate. The resulting ammonia molecule is channeled to the active site of PdxS. In Dictyoglomus turgidum (strain DSM 6724 / Z-1310), this protein is Pyridoxal 5'-phosphate synthase subunit PdxT.